Consider the following 271-residue polypeptide: 3-methyl-2-oxobutanoate hydroxymethyltransferase 2 (271 aa).

Mg(2+)-binding residues include Asp-53 and Asp-92. 3-methyl-2-oxobutanoate-binding positions include 53-54 (DS), Asp-92, and Lys-120. A Mg(2+)-binding site is contributed by Glu-122. Residue Glu-189 is the Proton acceptor of the active site.

The protein belongs to the PanB family. As to quaternary structure, homodecamer; pentamer of dimers. Mg(2+) is required as a cofactor.

Its subcellular location is the cytoplasm. The enzyme catalyses 3-methyl-2-oxobutanoate + (6R)-5,10-methylene-5,6,7,8-tetrahydrofolate + H2O = 2-dehydropantoate + (6S)-5,6,7,8-tetrahydrofolate. It participates in cofactor biosynthesis; (R)-pantothenate biosynthesis; (R)-pantoate from 3-methyl-2-oxobutanoate: step 1/2. Its function is as follows. Catalyzes the reversible reaction in which hydroxymethyl group from 5,10-methylenetetrahydrofolate is transferred onto alpha-ketoisovalerate to form ketopantoate. This is 3-methyl-2-oxobutanoate hydroxymethyltransferase 2 from Burkholderia lata (strain ATCC 17760 / DSM 23089 / LMG 22485 / NCIMB 9086 / R18194 / 383).